A 685-amino-acid chain; its full sequence is Acetate--CoA ligase [ADP-forming] I (685 aa).

The 37-residue stretch at 477 to 513 folds into the ATP-grasp domain; sequence LPVLEAYGIEVAPYGIARNVDEARDIAESIGYPVVLK. 503-514 contacts ATP; sequence AESIGYPVVLKV.

It in the N-terminal section; belongs to the acetate CoA ligase alpha subunit family. In the C-terminal section; belongs to the acetate CoA ligase beta subunit family. As to quaternary structure, homodimer.

The catalysed reaction is acetate + ATP + CoA = acetyl-CoA + ADP + phosphate. With respect to regulation, activity requires divalent metal cations. In terms of biological role, catalyzes the reversible formation of acetate and ATP from acetyl-CoA by using ADP and phosphate. Can use other substrates such as propionyl-CoA and butyryl-CoA, but not phenylacetyl-CoA. Seems to be involved primarily in the conversion of acetyl-CoA to acetate. Participates in the degradation of branched-chain amino acids via branched-chain-acyl-CoA esters. This Archaeoglobus fulgidus (strain ATCC 49558 / DSM 4304 / JCM 9628 / NBRC 100126 / VC-16) protein is Acetate--CoA ligase [ADP-forming] I.